The primary structure comprises 76 residues: Small ribosomal subunit protein bS18 (76 aa).

Belongs to the bacterial ribosomal protein bS18 family. As to quaternary structure, part of the 30S ribosomal subunit. Forms a tight heterodimer with protein bS6.

Functionally, binds as a heterodimer with protein bS6 to the central domain of the 16S rRNA, where it helps stabilize the platform of the 30S subunit. This Xanthomonas campestris pv. campestris (strain 8004) protein is Small ribosomal subunit protein bS18.